Consider the following 536-residue polypeptide: CTP synthase (536 aa).

The tract at residues 1–268 (MSFKSIFLTG…VDFLLSKFGF (268 aa)) is amidoligase domain. S14 provides a ligand contact to CTP. S14 lines the UTP pocket. 15–20 (SLGKGL) contacts ATP. Y55 lines the L-glutamine pocket. D72 is a binding site for ATP. Positions 72 and 142 each coordinate Mg(2+). CTP-binding positions include 149-151 (DIE), 188-193 (KTKPTQ), and K224. UTP is bound by residues 188–193 (KTKPTQ) and K224. One can recognise a Glutamine amidotransferase type-1 domain in the interval 294–532 (RIGLVGKYLE…LSAALDYSLE (239 aa)). G353 is an L-glutamine binding site. C380 functions as the Nucleophile; for glutamine hydrolysis in the catalytic mechanism. Residues 381–384 (LGMQ), E404, and R460 contribute to the L-glutamine site. Catalysis depends on residues H505 and E507.

It belongs to the CTP synthase family. Homotetramer.

It catalyses the reaction UTP + L-glutamine + ATP + H2O = CTP + L-glutamate + ADP + phosphate + 2 H(+). The enzyme catalyses L-glutamine + H2O = L-glutamate + NH4(+). It carries out the reaction UTP + NH4(+) + ATP = CTP + ADP + phosphate + 2 H(+). The protein operates within pyrimidine metabolism; CTP biosynthesis via de novo pathway; CTP from UDP: step 2/2. With respect to regulation, allosterically activated by GTP, when glutamine is the substrate; GTP has no effect on the reaction when ammonia is the substrate. The allosteric effector GTP functions by stabilizing the protein conformation that binds the tetrahedral intermediate(s) formed during glutamine hydrolysis. Inhibited by the product CTP, via allosteric rather than competitive inhibition. Its function is as follows. Catalyzes the ATP-dependent amination of UTP to CTP with either L-glutamine or ammonia as the source of nitrogen. Regulates intracellular CTP levels through interactions with the four ribonucleotide triphosphates. In Chlamydia muridarum (strain MoPn / Nigg), this protein is CTP synthase.